Consider the following 495-residue polypeptide: Dipeptide and tripeptide permease A (495 aa).

Over 1 to 20 (MTTSALNPLRQPKPFYLIFS) the chain is Cytoplasmic. Residues 21–41 (IEFWERFGFYGLQGILAVYLV) traverse the membrane as a helical segment. The Periplasmic portion of the chain corresponds to 42-51 (KALGLREADS). Residues 52-72 (FTLFSSFIALVYGLIAVGGWL) traverse the membrane as a helical segment. Residues 73–81 (GDKVLGTKR) are Cytoplasmic-facing. 2 consecutive transmembrane segments (helical) span residues 82-102 (TILLGALVLTAGYAMVTASSE) and 103-123 (HISLLYLGMGTIAVGNGLFKA). The Periplasmic portion of the chain corresponds to 124 to 145 (NPSSLLSKCYEENDPRLDGAFT). The helical transmembrane segment at 146–166 (MYYMAINIGSLLSMLATPWLA) threads the bilayer. The Cytoplasmic segment spans residues 167–171 (DQFGY). The chain crosses the membrane as a helical span at residues 172-192 (AHAFALSVVGMLITVANFILM). The Periplasmic segment spans residues 193–209 (QGWVKNYGSDADFRTPR). Residues 210-230 (LSTWLAVLAGVVAACAAAALL) traverse the membrane as a helical segment. Over 231–232 (LK) the chain is Cytoplasmic. A helical membrane pass occupies residues 233–253 (HEIIANVVLAVLSIGVVGLYV). Residues 254–266 (KETLLLKGAERKK) are Periplasmic-facing. Residues 267–287 (MIVAAILMLQATVFFVLYNQM) form a helical membrane-spanning segment. Residues 288-312 (PLSLNFFAIHNTEHMLFGIPVQPEQ) are Cytoplasmic-facing. Residues 313–333 (FQSLNPFWIMLASPLLALCYN) traverse the membrane as a helical segment. Topologically, residues 334 to 344 (KLGNRLPMPHK) are periplasmic. Residues 345-365 (FAIGMVLCAGAFLVLPLGAKY) traverse the membrane as a helical segment. Residues 366–375 (ANAQGLVSSN) are Cytoplasmic-facing. A helical transmembrane segment spans residues 376–396 (WMVLSYLLQSVGELLISGLGL). Residues 397-409 (AMVAQLVPQRLMG) lie on the Periplasmic side of the membrane. Residues 410–430 (FIMGAWFLTSAASSVIAGWVA) traverse the membrane as a helical segment. Residues 431–451 (GLTAAPDNVTNPLATLEIYSR) are Cytoplasmic-facing. Residues 452 to 472 (VFTQIGVVTGVIAVVTIIIAP) form a helical membrane-spanning segment. Residues 473-495 (WLHRMTLDEKPAHPEHEMALDAR) lie on the Periplasmic side of the membrane.

Belongs to the major facilitator superfamily. Proton-dependent oligopeptide transporter (POT/PTR) (TC 2.A.17) family. DtpA subfamily.

It is found in the cell inner membrane. Its function is as follows. Proton-dependent permease that transports di- and tripeptides. In Chromobacterium violaceum (strain ATCC 12472 / DSM 30191 / JCM 1249 / CCUG 213 / NBRC 12614 / NCIMB 9131 / NCTC 9757 / MK), this protein is Dipeptide and tripeptide permease A.